The primary structure comprises 329 residues: Probable alpha-1,2-galactosyltransferase gmh1 (329 aa).

Residues 1 to 14 lie on the Cytoplasmic side of the membrane; the sequence is MLSFFTKNTLTKRK. A helical; Signal-anchor for type II membrane protein membrane pass occupies residues 15–35; the sequence is LIMLALAIVFTFFAFGLYFIP. The Lumenal segment spans residues 36–329; sequence HDEISVFDFK…LWTKYKDKII (294 aa). N-linked (GlcNAc...) asparagine glycosylation is found at Asn-127 and Asn-169.

It belongs to the glycosyltransferase 34 family.

It localises to the golgi apparatus membrane. This Schizosaccharomyces pombe (strain 972 / ATCC 24843) (Fission yeast) protein is Probable alpha-1,2-galactosyltransferase gmh1 (gmh1).